The chain runs to 516 residues: D-aminopeptidase (516 aa).

The active-site Nucleophile is the Ser-61. The active-site Proton donor/acceptor is Lys-64. The important for specificity stretch occupies residues 476–486; sequence RRSMDAPAPGD. Asp-480 serves as a coordination point for substrate.

It belongs to the peptidase S12 family. As to quaternary structure, homodimer.

The catalysed reaction is Release of an N-terminal D-amino acid from a peptide, Xaa-|-Yaa-, in which Xaa is preferably D-Ala, D-Ser or D-Thr. D-amino acid amides and methyl esters also are hydrolyzed, as is glycine amide.. With respect to regulation, inhibited by beta-lactam compounds such as 6-aminopenicillic acid, 7-aminocephalosporanic acid, benzylpenicillin and ampicillin. Inhibited by p-chloromercuribenzoate. Functionally, hydrolyzes N-terminal residues in D-amino acid-containing peptides. This is D-aminopeptidase from Cereibacter sphaeroides (strain ATCC 17023 / DSM 158 / JCM 6121 / CCUG 31486 / LMG 2827 / NBRC 12203 / NCIMB 8253 / ATH 2.4.1.) (Rhodobacter sphaeroides).